We begin with the raw amino-acid sequence, 166 residues long: Replication gene B protein (166 aa).

In terms of biological role, required for lagging strand synthesis. Might interact with the host dnaB protein. The sequence is that of Replication gene B protein (B) from Escherichia phage P2 (Bacteriophage P2).